A 59-amino-acid polypeptide reads, in one-letter code: Potassium channel toxin alpha-KTx 3.10 (59 aa).

The first 22 residues, 1–22, serve as a signal peptide directing secretion; the sequence is MKVFFAVLIALFVCSMVIGIHG. Disulfide bonds link cysteine 30–cysteine 50, cysteine 36–cysteine 55, and cysteine 40–cysteine 57.

It belongs to the short scorpion toxin superfamily. Potassium channel inhibitor family. Alpha-KTx 03 subfamily. In terms of tissue distribution, expressed by the venom gland.

It is found in the secreted. In terms of biological role, inhibits insect potassium channel. Is at least a 100-fold more potent against the Drosophila Shaker channel than towards its mammalian homologs Kv1.1/KCNA1 and Kv1.3/KCNA3. The protein is Potassium channel toxin alpha-KTx 3.10 of Buthus israelis (Israeli scorpion).